Reading from the N-terminus, the 37-residue chain is Dolichyl-diphosphooligosaccharide--protein glycosyltransferase subunit 4 (37 aa).

Over 1-4 the chain is Lumenal; it reads MITD. The chain crosses the membrane as a helical span at residues 5 to 25; it reads VQLAIFANMLGVSLFLLVVLY. At 26 to 37 the chain is on the cytoplasmic side; it reads HYVAVNNPKKQE.

The protein belongs to the OST4 family. In terms of assembly, component of the oligosaccharyltransferase (OST) complex. OST exists in two different complex forms which contain common core subunits RPN1, RPN2, OST48, OST4, DAD1 and TMEM258, either STT3A or STT3B as catalytic subunits, and form-specific accessory subunits. STT3A complex assembly occurs through the formation of 3 subcomplexes. Subcomplex 1 contains RPN1 and TMEM258, subcomplex 2 contains the STT3A-specific subunits STT3A, DC2/OSTC, and KCP2 as well as the core subunit OST4, and subcomplex 3 contains RPN2, DAD1, and OST48. The STT3A complex can form stable complexes with the Sec61 complex or with both the Sec61 and TRAP complexes.

The protein resides in the endoplasmic reticulum. It is found in the endoplasmic reticulum membrane. It functions in the pathway protein modification; protein glycosylation. In terms of biological role, subunit of the oligosaccharyl transferase (OST) complex that catalyzes the initial transfer of a defined glycan (Glc(3)Man(9)GlcNAc(2) in eukaryotes) from the lipid carrier dolichol-pyrophosphate to an asparagine residue within an Asn-X-Ser/Thr consensus motif in nascent polypeptide chains, the first step in protein N-glycosylation. N-glycosylation occurs cotranslationally and the complex associates with the Sec61 complex at the channel-forming translocon complex that mediates protein translocation across the endoplasmic reticulum (ER). All subunits are required for a maximal enzyme activity. Specifically involved in maintaining stability of STT3A-containing OST complexes. The chain is Dolichyl-diphosphooligosaccharide--protein glycosyltransferase subunit 4 from Homo sapiens (Human).